A 451-amino-acid chain; its full sequence is Penicillin-binding protein 4* (451 aa).

The active-site Acyl-ester intermediate is the Ser-61.

This sequence belongs to the beta-lactamase family.

The protein resides in the forespore outer membrane. It participates in cell wall biogenesis; peptidoglycan biosynthesis. Probably involved in peptidoglycan modification during cortex synthesis. In Bacillus subtilis (strain 168), this protein is Penicillin-binding protein 4* (pbpE).